The primary structure comprises 506 residues: uncharacterized protein (506 aa).

It belongs to the Mg-chelatase subunits D/I family. ComM subfamily.

This is an uncharacterized protein from Escherichia coli (strain K12).